Consider the following 497-residue polypeptide: Bypass of stop codon protein 6 (497 aa).

The Lumenal portion of the chain corresponds to 1–72; that stretch reads MDASSVPPKV…KVKTYPLNYQ (72 aa). A phosphoserine mark is found at S37 and S41. N49 is a glycosylation site (N-linked (GlcNAc...) asparagine). Residues 73 to 93 traverse the membrane as a helical segment; sequence TVPLVKLQVIACLIMFVVFGM. The Cytoplasmic portion of the chain corresponds to 94–144; the sequence is NDQTVGALLPTLIEYYHISRVDVSNVFIVQLCGYVMASLSKERLNKHFGMR. Residues 145–165 traverse the membrane as a helical segment; that stretch reads GGMLLAAGLCIVFLIILATAP. Residues 166-167 are Lumenal-facing; the sequence is SS. Residues 168–188 form a helical membrane-spanning segment; sequence FYVCMFCGLPLGLGIGILDST. At 189–205 the chain is on the cytoplasmic side; it reads GNVLMGSLLVHKNELMG. Residues 206 to 226 form a helical membrane-spanning segment; sequence IMHGLYGAAAMVTPPLVSYFV. Residues 227 to 232 are Lumenal-facing; it reads EWGHWS. A helical transmembrane segment spans residues 233–253; it reads LFFLIPLFFSIIGMIVIFPAF. Over 254 to 300 the chain is Cytoplasmic; sequence KFETASKYDYLCSVENKESNNDVEEAGDNSLMESTKASPGFFELLRN. A helical membrane pass occupies residues 301–321; the sequence is PAIFLYSLYLFLYLGAEITTG. Residues 322–340 lie on the Lumenal side of the membrane; it reads SWFFSYLLETKSSNKVAMS. A helical membrane pass occupies residues 341–361; sequence YIAASFWTGLTVGRLCLGFVT. Residues 362–373 lie on the Cytoplasmic side of the membrane; it reads ERFFENEYKASK. The chain crosses the membrane as a helical span at residues 374 to 394; sequence AYAFLTLSSYTLFVLVGLINS. The Lumenal portion of the chain corresponds to 395 to 397; it reads SSV. The chain crosses the membrane as a helical span at residues 398 to 418; sequence FYFVVLFFVVFCCGTFIGPLF. Residues 419-439 lie on the Cytoplasmic side of the membrane; it reads PNASIVALQVLPKRLHVSGVG. Residues 440-460 traverse the membrane as a helical segment; that stretch reads VAVAVGGCGGAAIPYLAGVIA. At 461 to 462 the chain is on the lumenal side; that stretch reads HT. Residues 463 to 483 traverse the membrane as a helical segment; it reads VGIQYIPLLCWIMVALFTLEW. Over 484–497 the chain is Cytoplasmic; the sequence is TLYPKFIKGHEEYF.

Belongs to the major facilitator superfamily.

It localises to the golgi apparatus. It is found in the cis-Golgi network membrane. In terms of biological role, probable transporter. This is Bypass of stop codon protein 6 (BSC6) from Saccharomyces cerevisiae (strain ATCC 204508 / S288c) (Baker's yeast).